Consider the following 302-residue polypeptide: Aspartate carbamoyltransferase catalytic subunit (302 aa).

R53 and T54 together coordinate carbamoyl phosphate. An L-aspartate-binding site is contributed by K82. Carbamoyl phosphate is bound by residues R103, H131, and Q134. L-aspartate-binding residues include R164 and R223. L260 and P261 together coordinate carbamoyl phosphate.

The protein belongs to the aspartate/ornithine carbamoyltransferase superfamily. ATCase family. As to quaternary structure, heterooligomer of catalytic and regulatory chains.

It catalyses the reaction carbamoyl phosphate + L-aspartate = N-carbamoyl-L-aspartate + phosphate + H(+). It participates in pyrimidine metabolism; UMP biosynthesis via de novo pathway; (S)-dihydroorotate from bicarbonate: step 2/3. Catalyzes the condensation of carbamoyl phosphate and aspartate to form carbamoyl aspartate and inorganic phosphate, the committed step in the de novo pyrimidine nucleotide biosynthesis pathway. This chain is Aspartate carbamoyltransferase catalytic subunit, found in Methanococcus vannielii (strain ATCC 35089 / DSM 1224 / JCM 13029 / OCM 148 / SB).